A 589-amino-acid polypeptide reads, in one-letter code: TAF5-like RNA polymerase II p300/CBP-associated factor-associated factor 65 kDa subunit 5L (589 aa).

A compositionally biased stretch (polar residues) spans 211-221; it reads ASGSSSRSENN. The tract at residues 211–230 is disordered; it reads ASGSSSRSENNGLEPPDMPS. WD repeat units follow at residues 266–305, 340–379, 382–421, 424–463, 466–505, and 508–547; these read NTEQ…LKSE, GHCG…NTVL, GHAY…PLRI, GHLA…SVRL, GHRG…LYKE, and GHTD…CSAP.

Belongs to the WD repeat TAF5 family. As to quaternary structure, the PCAF complex is composed of a number of TBP-associated factors (TAFS), such as TAF5, TAF5L, TAF6, TAF6L, TAF9, TAF10 and TAF12, PCAF, and also PCAF-associated factors (PAFs), such as TADA2L/ADA2, TADA3L/ADA3 and SPT3. Component of the STAGA transcription coactivator-HAT complex, at least composed of SUPT3H, GCN5L2, TAF5L, TAF6L, SUPT7L, TADA3L, TAD1L, TAF10, TAF12, TRRAP and TAF9.

Its subcellular location is the nucleus. Its function is as follows. Functions as a component of the PCAF complex. The PCAF complex is capable of efficiently acetylating histones in a nucleosomal context. The PCAF complex could be considered as the human version of the yeast SAGA complex. With TAF6L, acts as an epigenetic regulator essential for somatic reprogramming. Regulates target genes through H3K9ac deposition and MYC recruitment which trigger MYC regulatory network to orchestrate gene expression programs to control embryonic stem cell state. The chain is TAF5-like RNA polymerase II p300/CBP-associated factor-associated factor 65 kDa subunit 5L from Homo sapiens (Human).